The primary structure comprises 464 residues: Chitobiosyldiphosphodolichol beta-mannosyltransferase (464 aa).

At 1 to 2 (MA) the chain is on the lumenal side. The helical transmembrane segment at 3–23 (ASCLVLLALCLLLPLLLLGGW) threads the bilayer. The Cytoplasmic segment spans residues 24–99 (KRWRRGRAAR…ELQSLAVGPR (76 aa)). Residues 100 to 120 (VFQYGVKVVLQAMYLLWKLMW) constitute an intramembrane region (helical). Over 121-464 (REPGAYIFLQ…QTVLPLVMDT (344 aa)) the chain is Cytoplasmic. Phosphoserine is present on Ser-242. The tract at residues 243–262 (PFRARSEPEDPVTERSAFTE) is disordered.

It belongs to the glycosyltransferase group 1 family. Glycosyltransferase 33 subfamily.

The protein localises to the endoplasmic reticulum membrane. The enzyme catalyses an N,N'-diacetylchitobiosyl-diphospho-di-trans,poly-cis-dolichol + GDP-alpha-D-mannose = a beta-D-Man-(1-&gt;4)-beta-D-GlcNAc-(1-&gt;4)-alpha-D-GlcNAc-diphospho-di-trans,poly-cis-dolichol + GDP + H(+). It participates in protein modification; protein glycosylation. Its function is as follows. Mannosyltransferase that operates in the biosynthetic pathway of dolichol-linked oligosaccharides, the glycan precursors employed in protein asparagine (N)-glycosylation. The assembly of dolichol-linked oligosaccharides begins on the cytosolic side of the endoplasmic reticulum membrane and finishes in its lumen. The sequential addition of sugars to dolichol pyrophosphate produces dolichol-linked oligosaccharides containing fourteen sugars, including two GlcNAcs, nine mannoses and three glucoses. Once assembled, the oligosaccharide is transferred from the lipid to nascent proteins by oligosaccharyltransferases. Catalyzes, on the cytoplasmic face of the endoplasmic reticulum, the addition of the first mannose residues to the dolichol-linked oligosaccharide chain, to produce Man1GlcNAc(2)-PP-dolichol core oligosaccharide. Man1GlcNAc(2)-PP-dolichol is a substrate for ALG2, the following enzyme in the biosynthetic pathway. The polypeptide is Chitobiosyldiphosphodolichol beta-mannosyltransferase (Homo sapiens (Human)).